A 1482-amino-acid polypeptide reads, in one-letter code: Pregnancy zone protein (1482 aa).

The signal sequence occupies residues 1–25; sequence MRKDRLLHLCLVLLLILLSASDSNS. Residues N54, N69, N246, N392, and N406 are each glycosylated (N-linked (GlcNAc...) asparagine). Positions 685–735 are bait region; it reads CSVIPSVSAGAVGQGYYGAGLGVVERPYVPQLGTYNVIPLNNEQSSGPVPE. 3 N-linked (GlcNAc...) asparagine glycosylation sites follow: N753, N875, and N932. A cross-link (isoglutamyl cysteine thioester (Cys-Gln)) is located at residues 978–981; the sequence is CGEQ. Residues N997 and N1430 are each glycosylated (N-linked (GlcNAc...) asparagine).

The protein belongs to the protease inhibitor I39 (alpha-2-macroglobulin) family. In terms of assembly, homotetramer, which consists of two pairs of disulfide-linked chains. As to expression, plasma. Prominent constituent of late-pregnancy sera.

The protein localises to the secreted. In terms of biological role, is able to inhibit all four classes of proteinases by a unique 'trapping' mechanism. This protein has a peptide stretch, called the 'bait region' which contains specific cleavage sites for different proteinases. When a proteinase cleaves the bait region, a conformational change is induced in the protein which traps the proteinase. The entrapped enzyme remains active against low molecular weight substrates (activity against high molecular weight substrates is greatly reduced). Following cleavage in the bait region a thioester bond is hydrolyzed and mediates the covalent binding of the protein to the proteinase. This chain is Pregnancy zone protein (PZP), found in Homo sapiens (Human).